Here is a 470-residue protein sequence, read N- to C-terminus: Na(+)-translocating NADH-quinone reductase subunit A (470 aa).

The protein belongs to the NqrA family. Composed of six subunits; NqrA, NqrB, NqrC, NqrD, NqrE and NqrF.

It carries out the reaction a ubiquinone + n Na(+)(in) + NADH + H(+) = a ubiquinol + n Na(+)(out) + NAD(+). In terms of biological role, NQR complex catalyzes the reduction of ubiquinone-1 to ubiquinol by two successive reactions, coupled with the transport of Na(+) ions from the cytoplasm to the periplasm. NqrA to NqrE are probably involved in the second step, the conversion of ubisemiquinone to ubiquinol. The sequence is that of Na(+)-translocating NADH-quinone reductase subunit A from Chlamydia caviae (strain ATCC VR-813 / DSM 19441 / 03DC25 / GPIC) (Chlamydophila caviae).